The primary structure comprises 273 residues: Putative pyruvate, phosphate dikinase regulatory protein (273 aa).

Position 149 to 156 (149 to 156) interacts with ADP; it reads GPSRTSKT.

The protein belongs to the pyruvate, phosphate/water dikinase regulatory protein family. PDRP subfamily.

The enzyme catalyses N(tele)-phospho-L-histidyl/L-threonyl-[pyruvate, phosphate dikinase] + ADP = N(tele)-phospho-L-histidyl/O-phospho-L-threonyl-[pyruvate, phosphate dikinase] + AMP + H(+). It carries out the reaction N(tele)-phospho-L-histidyl/O-phospho-L-threonyl-[pyruvate, phosphate dikinase] + phosphate + H(+) = N(tele)-phospho-L-histidyl/L-threonyl-[pyruvate, phosphate dikinase] + diphosphate. Functionally, bifunctional serine/threonine kinase and phosphorylase involved in the regulation of the pyruvate, phosphate dikinase (PPDK) by catalyzing its phosphorylation/dephosphorylation. This is Putative pyruvate, phosphate dikinase regulatory protein from Rickettsia africae (strain ESF-5).